Consider the following 202-residue polypeptide: Matrix protein (202 aa).

The disordered stretch occupies residues 1-33 (MNILRKIVKNRKDEDTQKPSPASAPPDDDDLWL). The PPXY motif signature appears at 35–38 (PPEY). Residues 115-151 (KLRRTLIFQWADSRGPLEGEELEHSQEITWDDDTEFV) are essential for glycoprotein binding.

It belongs to the lyssavirus matrix protein family. In terms of assembly, homomultimer. Interacts with nucleoprotein and with the cytoplasmic domain of glycoprotein. Interacts with host ATP6V1A; this interaction plays an important role in virion uncoating after viral entry.

Its subcellular location is the virion membrane. The protein localises to the host endomembrane system. It localises to the host cytoplasm. Functionally, plays a major role in assembly, budding and uncoating of virion after membrane fusion. Completely covers the ribonucleoprotein coil and keep it in condensed bullet-shaped form. Inhibits viral transcription and stimulates replication. Plays a major role in early induction of TRAIL-mediated apoptosis in infected neurons. Inhibits the integrated stress response (ISR) in the infected cell by blocking the formation of stress granules. The protein is Matrix protein (M) of Homo sapiens (Human).